A 60-amino-acid chain; its full sequence is Large ribosomal subunit protein uL30 (60 aa).

It belongs to the universal ribosomal protein uL30 family. Part of the 50S ribosomal subunit.

In Streptomyces avermitilis (strain ATCC 31267 / DSM 46492 / JCM 5070 / NBRC 14893 / NCIMB 12804 / NRRL 8165 / MA-4680), this protein is Large ribosomal subunit protein uL30.